A 318-amino-acid chain; its full sequence is Transaldolase (318 aa).

The Schiff-base intermediate with substrate role is filled by K132.

Belongs to the transaldolase family. Type 1 subfamily. In terms of assembly, homodimer.

It is found in the cytoplasm. It catalyses the reaction D-sedoheptulose 7-phosphate + D-glyceraldehyde 3-phosphate = D-erythrose 4-phosphate + beta-D-fructose 6-phosphate. It participates in carbohydrate degradation; pentose phosphate pathway; D-glyceraldehyde 3-phosphate and beta-D-fructose 6-phosphate from D-ribose 5-phosphate and D-xylulose 5-phosphate (non-oxidative stage): step 2/3. Functionally, transaldolase is important for the balance of metabolites in the pentose-phosphate pathway. This chain is Transaldolase, found in Shewanella oneidensis (strain ATCC 700550 / JCM 31522 / CIP 106686 / LMG 19005 / NCIMB 14063 / MR-1).